The sequence spans 118 residues: Protein yippee-like 1 (118 aa).

Positions 19–116 constitute a Yippee domain; sequence RTYSCIHCRA…IELAHMIKDN (98 aa). Cysteine 23, cysteine 26, cysteine 79, and cysteine 82 together coordinate Zn(2+). The Nuclear localization signal motif lies at 99–104; that stretch reads KYKEGK.

This sequence belongs to the yippee family.

Its subcellular location is the nucleus. In terms of biological role, may play a role in epithelioid conversion of fibroblasts. The polypeptide is Protein yippee-like 1 (Ypel1) (Mus musculus (Mouse)).